Reading from the N-terminus, the 999-residue chain is Testis anion transporter 1 (999 aa).

At 1-93 (MQTERSLQSF…YRFKDWLLGD (93 aa)) the chain is on the cytoplasmic side. A helical membrane pass occupies residues 94–114 (LLAGLSVGLVQVPQGLILSLL). Over 115 to 117 (TRQ) the chain is Extracellular. A helical membrane pass occupies residues 118-138 (LIPPLNVTYAAFCSSVIYVIF). A topological domain (cytoplasmic) is located at residue Gly139. A helical transmembrane segment spans residues 140-160 (SCHQMSIGPFFLVSALMINVL). The Extracellular segment spans residues 161–200 (KDRPFNNGHLILGTFVKDDFSVPTFYLSYNRSLSMVASTT). A glycan (N-linked (GlcNAc...) asparagine) is linked at Asn190. A helical transmembrane segment spans residues 201 to 221 (FLTGIIQLSMGMLGMGFMATY). The Cytoplasmic segment spans residues 222-230 (LPEAATSAY). The chain crosses the membrane as a helical span at residues 231 to 251 (LAAVALHIILAQMTCILGIMV). Residues 252–268 (SFHAGPISFIYNIINYC) are Extracellular-facing. A helical transmembrane segment spans residues 269-289 (IALPKANSTSILLFITSVVAL). Residues 290–305 (RINKCIRITFNRYPIE) lie on the Cytoplasmic side of the membrane. A helical membrane pass occupies residues 306-326 (FPMELLLILGFSLLTSKITMA). Over 327–354 (TENSKMLMNMIPYSFVFPENPEFGILSR) the chain is Extracellular. Residues 355 to 375 (VVLQALSLSFVSSFLLISLGK) traverse the membrane as a helical segment. Over 376-390 (KIANFHNYRTNSNQD) the chain is Cytoplasmic. The chain crosses the membrane as a helical span at residues 391 to 411 (LIAIGLCNLLSSFFKCCVFTG). Topologically, residues 412–427 (SLSRTTIQDKSGGRQQ) are extracellular. The helical transmembrane segment at 428-448 (FASLVGAGVMLLLMVKMESFF) threads the bilayer. Residues 449 to 453 (HNLPN) lie on the Cytoplasmic side of the membrane. A helical transmembrane segment spans residues 454–474 (AVLAGIILSNVVPYLEAIYNL). At 475-494 (PSLWRQDQYECIIWMVTFSS) the chain is on the extracellular side. The helical transmembrane segment at 495 to 515 (AILLGLDVGLLISLAFTFFVI) threads the bilayer. At 516–544 (TIRSHRTKILVLGQIPNTNIYRNVNDYRE) the chain is on the cytoplasmic side. An STAS domain is found at 541–796 (DYREVILIPG…LSLHDAVLFA (256 aa)). Residues 545 to 565 (VILIPGVKIFQCCSSITFVNV) traverse the membrane as a helical segment. Residues 566-999 (YHLKQKVLKE…RKPHNYPNSP (434 aa)) are Extracellular-facing. The segment at 661–999 (TVSSTSQRNI…RKPHNYPNSP (339 aa)) is interaction with RACGAP1. Disordered regions lie at residues 678-701 (EKAW…SESL) and 893-999 (SELD…PNSP). The span at 684 to 696 (NSPPRNSPLPPPE) shows a compositional bias: pro residues. Acidic residues-rich tracts occupy residues 893–903 (SELDPGSELDS) and 912–947 (ELES…EPEP). The span at 973–982 (GSSNSQSRAP) shows a compositional bias: polar residues.

The protein belongs to the SLC26A/SulP transporter (TC 2.A.53) family. Interacts with RACGAP1. Interacts with CFTR; stimulates anion transport activity of CFTR. Post-translationally, N-glycosylated. As to expression, expressed in testis and epididymis. Located at the end of the midpiece of the flagella, known as the annulus, in spermatozoa.

It localises to the membrane. The enzyme catalyses sulfate(out) + chloride(in) = sulfate(in) + chloride(out). It carries out the reaction oxalate(in) + chloride(out) = oxalate(out) + chloride(in). Functionally, antiporter that mediates the exchange of sulfate and oxalate against chloride ions across a membrane. Stimulates anion transport activity of CFTR. May cooperate with CFTR in the regulation of chloride and bicarbonate ions fluxes required for activation of the ADCY10/PKA pathway during sperm motility and sperm capacitation. May play a role in sperm tail differentiation and motility and hence male fertility. This Mus musculus (Mouse) protein is Testis anion transporter 1.